A 523-amino-acid polypeptide reads, in one-letter code: Polypyrimidine tract-binding protein 3 (523 aa).

The tract at residues 1-25 (MNSSTSAGVYANGNDNKKFKGDRPP) is disordered. RRM domains are found at residues 30–114 (RVLH…NLPN), 153–229 (LRII…FSKL), and 329–403 (SVLL…LSKH). A Glycyl lysine isopeptide (Lys-Gly) (interchain with G-Cter in SUMO2) cross-link involves residue K36. Y98 bears the Phosphotyrosine mark. T109 carries the post-translational modification Phosphothreonine. K187 participates in a covalent cross-link: Glycyl lysine isopeptide (Lys-Gly) (interchain with G-Cter in SUMO2). K394 is subject to N6-acetyllysine. The tract at residues 406–426 (VQLPREGQEDQGLTKDFSNSP) is disordered. Position 425 is a phosphoserine (S425). Positions 446–521 (ATLHLSNIPP…HHLRVSFSKS (76 aa)) constitute an RRM 4 domain.

Interacts with THBS4 (via the acidic amphipathic C-terminus).

Functionally, RNA-binding protein that mediates pre-mRNA alternative splicing regulation. Plays a role in the regulation of cell proliferation, differentiation and migration. Positive regulator of EPO-dependent erythropoiesis. Participates in cell differentiation regulation by repressing tissue-specific exons. Promotes Fas exon 6 skipping. Binds RNA, preferentially to both poly(G) and poly(U). This chain is Polypyrimidine tract-binding protein 3 (Ptbp3), found in Mus musculus (Mouse).